The following is a 374-amino-acid chain: tRNA-specific 2-thiouridylase MnmA (374 aa).

Residues 15–22 (GMSGGVDS) and methionine 41 contribute to the ATP site. The interval 101-103 (NPD) is interaction with target base in tRNA. Cysteine 106 functions as the Nucleophile in the catalytic mechanism. An intrachain disulfide couples cysteine 106 to cysteine 206. Glycine 130 is a binding site for ATP. The interval 156–158 (KDQ) is interaction with tRNA. Cysteine 206 acts as the Cysteine persulfide intermediate in catalysis. Residues 324-325 (RY) are interaction with tRNA.

It belongs to the MnmA/TRMU family.

Its subcellular location is the cytoplasm. The catalysed reaction is S-sulfanyl-L-cysteinyl-[protein] + uridine(34) in tRNA + AH2 + ATP = 2-thiouridine(34) in tRNA + L-cysteinyl-[protein] + A + AMP + diphosphate + H(+). Catalyzes the 2-thiolation of uridine at the wobble position (U34) of tRNA, leading to the formation of s(2)U34. This chain is tRNA-specific 2-thiouridylase MnmA, found in Aromatoleum aromaticum (strain DSM 19018 / LMG 30748 / EbN1) (Azoarcus sp. (strain EbN1)).